Consider the following 211-residue polypeptide: MTYYGVLFVEKCTPSTITQLQDVLSTDLISMGDKWSFELKTFRTSAKNTDPNDTKVMHTVQLSHKNNETVTIKNQSAIITPTYVTKALYDNGCVFGTPEPFDYMLSNKLSNIWTQRQSIKGEFGVSYQTADLSIRVNNAFSYSGFQGLILELESKSSDNLEAFEKNVERVRTMLSGMGLSDVRVSSDKSQGSKQEDSSLFDLAAHYLKVLG.

It belongs to the Mediator complex subunit 20 family. Component of the Mediator complex.

Its subcellular location is the nucleus. Its function is as follows. Component of the Mediator complex, a coactivator involved in the regulated transcription of nearly all RNA polymerase II-dependent genes. Mediator functions as a bridge to convey information from gene-specific regulatory proteins to the basal RNA polymerase II transcription machinery. Mediator is recruited to promoters by direct interactions with regulatory proteins and serves as a scaffold for the assembly of a functional preinitiation complex with RNA polymerase II and the general transcription factors. The sequence is that of Mediator of RNA polymerase II transcription subunit 20 (SRB2) from Kluyveromyces lactis (strain ATCC 8585 / CBS 2359 / DSM 70799 / NBRC 1267 / NRRL Y-1140 / WM37) (Yeast).